Reading from the N-terminus, the 1342-residue chain is DNA-directed RNA polymerase subunit beta (1342 aa).

This sequence belongs to the RNA polymerase beta chain family. As to quaternary structure, the RNAP catalytic core consists of 2 alpha, 1 beta, 1 beta' and 1 omega subunit. When a sigma factor is associated with the core the holoenzyme is formed, which can initiate transcription.

It carries out the reaction RNA(n) + a ribonucleoside 5'-triphosphate = RNA(n+1) + diphosphate. Its function is as follows. DNA-dependent RNA polymerase catalyzes the transcription of DNA into RNA using the four ribonucleoside triphosphates as substrates. The protein is DNA-directed RNA polymerase subunit beta of Aeromonas salmonicida (strain A449).